The following is a 691-amino-acid chain: CREB-regulated transcription coactivator 2 (691 aa).

The span at 1 to 20 (MATSGANGPGSATASASNPR) shows a compositional bias: polar residues. Positions 1–30 (MATSGANGPGSATASASNPRKFSEKIALQK) are disordered. A2 bears the N-acetylalanine mark. The residue at position 51 (R51) is an Asymmetric dimethylarginine; by PRMT6. Phosphoserine occurs at positions 70, 86, and 90. 3 positions are modified to asymmetric dimethylarginine; by PRMT6: R99, R120, and R123. S136 bears the Phosphoserine mark. An asymmetric dimethylarginine; by PRMT6 mark is found at R161 and R168. At T169 the chain carries Phosphothreonine. S171 is modified (phosphoserine; by AMPK, MARK2, SIK1 and SIK2). Residues 174–186 (ALHTSVMNPNPQD) show a composition bias toward polar residues. The tract at residues 174 to 195 (ALHTSVMNPNPQDTYPGPTPPS) is disordered. The residue at position 192 (T192) is a Phosphothreonine. K234 participates in a covalent cross-link: Glycyl lysine isopeptide (Lys-Gly) (interchain with G-Cter in SUMO2). The short motif at 271-287 (TGGSLPDLTNLHFPPPL) is the Nuclear export signal element. A Phosphoserine; by MARK2 modification is found at S274. 2 disordered regions span residues 280–306 (NLHFPPPLPTPLDPEETVYPSLSGGNS) and 335–491 (HSPL…YSPP). Phosphoserine occurs at positions 306, 368, 393, 433, and 456. Low complexity-rich tracts occupy residues 335–383 (HSPL…HALP) and 390–411 (PSLSAPALSSSSSSSSTSSPVL). Polar residues predominate over residues 447–468 (SQQQLPKQFSPTMSPTLSSITQ). Y488 is modified (phosphotyrosine). A phosphoserine mark is found at S489 and S492. T501 is subject to Phosphothreonine. The tract at residues 513–543 (CLVQPSGGQPPGRQPHYGTLYPPGSSGHGQQ) is disordered. A phosphoserine mark is found at S611, S621, and S622.

The protein belongs to the TORC family. Binds, as a tetramer, through its N-terminal region, with the bZIP domain of CREB1. 'Arg-314' in the bZIP domain of CREB1 is essential for this interaction. Interaction, via its C-terminal, with TAF4, enhances recruitment of TAF4 to CREB1. Interacts with SIK2. Interacts with 14-3-3 proteins, YWHAB and YWHAG. Interacts (probably when phosphorylated at Ser-171) with YWHAE. Interacts with calmodulin-dependent catalytic subunit PPP3CA/calcineurin A. Interaction with COP1 mediates nuclear export and degradation of CRTC2. Phosphorylation/dephosphorylation states of Ser-171 are required for regulating transduction of CREB activity. CRTCs/TORCs are inactive when phosphorylated, and active when dephosphorylated at this site. This primary site of phosphorylation, is regulated by cAMP and calcium levels and is dependent on the phosphorylation of SIKs (SIK1 and SIK2) by LKB1. Following adenylyl cyclase activation, dephosphorylated at Ser-171 by PPP3CA/calcineurin A resulting in CRTC2 dissociation from 14-3-3 proteins and PPP3CA. Both insulin and AMPK increase this phosphorylation of CRTC2 while glucagon suppresses it. Phosphorylation at Ser-274 by MARK2 is induced under low glucose conditions and dephosphorylated in response to glucose influx. Phosphorylation at Ser-274 promotes interaction with 14-3-3 proteins and translocation to the cytoplasm. Post-translationally, asymmetric dimethylation of arginine resisues by PRMT6 enhances the association of CRTC2 with CREB on the promoters of gluconeogenic genes.

It localises to the cytoplasm. Its subcellular location is the nucleus. Transcriptional coactivator for CREB1 which activates transcription through both consensus and variant cAMP response element (CRE) sites. Acts as a coactivator, in the SIK/TORC signaling pathway, being active when dephosphorylated and acts independently of CREB1 'Ser-133' phosphorylation. Enhances the interaction of CREB1 with TAF4. Regulates gluconeogenesis as a component of the LKB1/AMPK/TORC2 signaling pathway. Regulates the expression of specific genes such as the steroidogenic gene, StAR. Potent coactivator of PPARGC1A and inducer of mitochondrial biogenesis in muscle cells. The sequence is that of CREB-regulated transcription coactivator 2 (Crtc2) from Rattus norvegicus (Rat).